Here is a 475-residue protein sequence, read N- to C-terminus: Ribosomal protein uS12 methylthiotransferase RimO (475 aa).

In terms of domain architecture, MTTase N-terminal spans 36–150; sequence NKINFISLGC…ILKAVQSTQK (115 aa). The [4Fe-4S] cluster site is built by Cys45, Cys81, Cys113, Cys185, Cys189, and Cys192. The 233-residue stretch at 171–403 folds into the Radical SAM core domain; the sequence is STPKHYAYLK…MQVQKKVVKK (233 aa). The TRAM domain occupies 406–475; sequence KKMIGKKIAV…ADYDLVGHVI (70 aa).

This sequence belongs to the methylthiotransferase family. RimO subfamily. [4Fe-4S] cluster serves as cofactor.

It is found in the cytoplasm. The enzyme catalyses L-aspartate(89)-[ribosomal protein uS12]-hydrogen + (sulfur carrier)-SH + AH2 + 2 S-adenosyl-L-methionine = 3-methylsulfanyl-L-aspartate(89)-[ribosomal protein uS12]-hydrogen + (sulfur carrier)-H + 5'-deoxyadenosine + L-methionine + A + S-adenosyl-L-homocysteine + 2 H(+). Its function is as follows. Catalyzes the methylthiolation of an aspartic acid residue of ribosomal protein uS12. In Protochlamydia amoebophila (strain UWE25), this protein is Ribosomal protein uS12 methylthiotransferase RimO.